Here is a 662-residue protein sequence, read N- to C-terminus: Calcium-dependent protease (662 aa).

Residues 196-529 form the Peptidase S8 domain; that stretch reads QWHLKQTTIG…YGRINALKAV (334 aa). Active-site charge relay system residues include Asp233, His270, and Ser466. The region spanning 535–662 is the P/Homo B domain; that stretch reads AQPEPVSIFT…IRSLTIELGF (128 aa).

It belongs to the peptidase S8 family.

It localises to the cytoplasm. Its function is as follows. Degrades phycobiliproteins in vitro. Has a substrate specificity similar to that of trypsin. This is Calcium-dependent protease (prcA) from Trichormus variabilis (strain ATCC 29413 / PCC 7937) (Anabaena variabilis).